We begin with the raw amino-acid sequence, 448 residues long: Ribosomal protein uS12 methylthiotransferase RimO (448 aa).

One can recognise an MTTase N-terminal domain in the interval Glu7–Gln123. Positions 16, 52, 86, 161, 165, and 168 each coordinate [4Fe-4S] cluster. The Radical SAM core domain maps to Ser147–Lys377. Residues Arg380 to Asp448 enclose the TRAM domain.

This sequence belongs to the methylthiotransferase family. RimO subfamily. The cofactor is [4Fe-4S] cluster.

The protein resides in the cytoplasm. The enzyme catalyses L-aspartate(89)-[ribosomal protein uS12]-hydrogen + (sulfur carrier)-SH + AH2 + 2 S-adenosyl-L-methionine = 3-methylsulfanyl-L-aspartate(89)-[ribosomal protein uS12]-hydrogen + (sulfur carrier)-H + 5'-deoxyadenosine + L-methionine + A + S-adenosyl-L-homocysteine + 2 H(+). In terms of biological role, catalyzes the methylthiolation of an aspartic acid residue of ribosomal protein uS12. This is Ribosomal protein uS12 methylthiotransferase RimO from Citrifermentans bemidjiense (strain ATCC BAA-1014 / DSM 16622 / JCM 12645 / Bem) (Geobacter bemidjiensis).